A 293-amino-acid polypeptide reads, in one-letter code: ATP synthase gamma chain (293 aa).

Belongs to the ATPase gamma chain family. In terms of assembly, F-type ATPases have 2 components, CF(1) - the catalytic core - and CF(0) - the membrane proton channel. CF(1) has five subunits: alpha(3), beta(3), gamma(1), delta(1), epsilon(1). CF(0) has three main subunits: a, b and c.

It is found in the cell inner membrane. In terms of biological role, produces ATP from ADP in the presence of a proton gradient across the membrane. The gamma chain is believed to be important in regulating ATPase activity and the flow of protons through the CF(0) complex. In Gluconacetobacter diazotrophicus (strain ATCC 49037 / DSM 5601 / CCUG 37298 / CIP 103539 / LMG 7603 / PAl5), this protein is ATP synthase gamma chain.